We begin with the raw amino-acid sequence, 203 residues long: Small ribosomal subunit protein uS4 (203 aa).

A disordered region spans residues 1 to 46; the sequence is MSKRQSAKYKLDRRMGENIWGRPKSPVNRREYGPGQHGQRRKGKMS. An S4 RNA-binding domain is found at 94 to 157; that stretch reads RRLDAVVYRA…QEMALVAEAQ (64 aa).

The protein belongs to the universal ribosomal protein uS4 family. As to quaternary structure, part of the 30S ribosomal subunit. Contacts protein S5. The interaction surface between S4 and S5 is involved in control of translational fidelity.

Its function is as follows. One of the primary rRNA binding proteins, it binds directly to 16S rRNA where it nucleates assembly of the body of the 30S subunit. Functionally, with S5 and S12 plays an important role in translational accuracy. In Sphingopyxis alaskensis (strain DSM 13593 / LMG 18877 / RB2256) (Sphingomonas alaskensis), this protein is Small ribosomal subunit protein uS4.